A 160-amino-acid polypeptide reads, in one-letter code: Cytochrome b6-f complex subunit 4 (160 aa).

The next 3 membrane-spanning stretches (helical) occupy residues 36-56, 95-115, and 131-151; these read LLYI…GLAV, LLGV…PFLE, and TVFL…TLPI.

It belongs to the cytochrome b family. PetD subfamily. The 4 large subunits of the cytochrome b6-f complex are cytochrome b6, subunit IV (17 kDa polypeptide, petD), cytochrome f and the Rieske protein, while the 4 small subunits are petG, petL, petM and petN. The complex functions as a dimer.

Its subcellular location is the plastid. The protein resides in the chloroplast thylakoid membrane. Component of the cytochrome b6-f complex, which mediates electron transfer between photosystem II (PSII) and photosystem I (PSI), cyclic electron flow around PSI, and state transitions. The polypeptide is Cytochrome b6-f complex subunit 4 (Pisum sativum (Garden pea)).